Reading from the N-terminus, the 247-residue chain is 5'-nucleotidase SurE (247 aa).

A divalent metal cation-binding residues include Asp8, Asp9, Ser39, and Asn91.

The protein belongs to the SurE nucleotidase family. A divalent metal cation is required as a cofactor.

The protein localises to the cytoplasm. The catalysed reaction is a ribonucleoside 5'-phosphate + H2O = a ribonucleoside + phosphate. In terms of biological role, nucleotidase that shows phosphatase activity on nucleoside 5'-monophosphates. The protein is 5'-nucleotidase SurE of Pelobacter propionicus (strain DSM 2379 / NBRC 103807 / OttBd1).